Reading from the N-terminus, the 291-residue chain is MMDVAILVDENTRVIVQGITGFQGSFQAKRMLDYGTKVVGGVTPGKGGSEVHGIPVYNTVEEAVAETNADTSIIYVPARFATDAIFEAFDAGLRLVVCVTEGIPLYDEMLIHRKLREVKSMLLGPNCPGVISPGRSKVGLLPDRSFTQGNLGVVSRSGTLTYQICENLTKAGIGQSTVVGIGGDPMPGLTFVDVLKMFEEDEETKAVLLVGEIGGTAEEKAAEFIKQMSKPVVAFIAGRTAPPGKRMGHAGAIIEGSTGTAEAKMAALRDAGARVAETLLDVVKEVRRVLE.

Residues 20–23 (TGFQ), K46, and 99–101 (VTE) contribute to the CoA site. Y162 provides a ligand contact to substrate. The Tele-phosphohistidine intermediate role is filled by H249.

This sequence belongs to the succinate/malate CoA ligase alpha subunit family. Heterotetramer of two alpha and two beta subunits.

The catalysed reaction is succinate + ATP + CoA = succinyl-CoA + ADP + phosphate. The enzyme catalyses GTP + succinate + CoA = succinyl-CoA + GDP + phosphate. The protein operates within carbohydrate metabolism; tricarboxylic acid cycle; succinate from succinyl-CoA (ligase route): step 1/1. In terms of biological role, succinyl-CoA synthetase functions in the citric acid cycle (TCA), coupling the hydrolysis of succinyl-CoA to the synthesis of either ATP or GTP and thus represents the only step of substrate-level phosphorylation in the TCA. The alpha subunit of the enzyme binds the substrates coenzyme A and phosphate, while succinate binding and nucleotide specificity is provided by the beta subunit. The chain is Succinate--CoA ligase [ADP-forming] subunit alpha 1 from Archaeoglobus fulgidus (strain ATCC 49558 / DSM 4304 / JCM 9628 / NBRC 100126 / VC-16).